A 258-amino-acid polypeptide reads, in one-letter code: tRNA (guanine-N(7)-)-methyltransferase (258 aa).

S-adenosyl-L-methionine contacts are provided by residues Gly-76, 99–100 (EI), 132–133 (NA), and Leu-152. Asp-155 is an active-site residue. 230–232 (TEE) is a binding site for S-adenosyl-L-methionine.

The protein belongs to the class I-like SAM-binding methyltransferase superfamily. TrmB family.

It is found in the nucleus. It carries out the reaction guanosine(46) in tRNA + S-adenosyl-L-methionine = N(7)-methylguanosine(46) in tRNA + S-adenosyl-L-homocysteine. Its pathway is tRNA modification; N(7)-methylguanine-tRNA biosynthesis. Its function is as follows. Catalyzes the formation of N(7)-methylguanine at position 46 (m7G46) in tRNA. This is tRNA (guanine-N(7)-)-methyltransferase from Brugia malayi (Filarial nematode worm).